We begin with the raw amino-acid sequence, 71 residues long: Metallothionein-like protein 1 (71 aa).

The protein belongs to the metallothionein superfamily. Type 15 family.

Functionally, metallothioneins have a high content of cysteine residues that bind various heavy metals. This chain is Metallothionein-like protein 1 (MT1), found in Casuarina glauca (Swamp oak).